The primary structure comprises 265 residues: Glutamate racemase (265 aa).

Substrate contacts are provided by residues 9–10 (DS) and 41–42 (YG). Residue C72 is the Proton donor/acceptor of the active site. Residue 73–74 (NT) participates in substrate binding. The active-site Proton donor/acceptor is C183. Residue 184–185 (TH) coordinates substrate.

It belongs to the aspartate/glutamate racemases family.

The catalysed reaction is L-glutamate = D-glutamate. The protein operates within cell wall biogenesis; peptidoglycan biosynthesis. Provides the (R)-glutamate required for cell wall biosynthesis. This is Glutamate racemase from Lysinibacillus sphaericus (Bacillus sphaericus).